Consider the following 3084-residue polypeptide: MEEFLQRAKSKLDRSKQLEQVHAVIGPKSCDLDSLISAFTYAYFLDKVSPPGVLCLPVLNIPRTEFNYFTETRFILEELNIPESFHIFRDEINLHQLNDEGKLSITLVGSHVLGSEDRTLESAVVRVINPGEQSDGELGFPETSSSLVLKELLREAPELITQQLAHLLRGSILFTWMSMDPELPEKQEEILSILEEQFPNLPPRDDIINVLQESQLSAQGLSLEQTMLKDLKELSDGEIKVAISTVNMTLEDYLLHGNITSDLKAFTDKFGFDVLILISSFTWEEQQRQQIAVYSQNLELCSQICCELEESQNPCLELEPFECGCDEILVYQQEDPSVTSDQVFLLLKEVINRRCAEMVSNSRTSSTEAVAGSAPLSQGSSGIMELYGSDIEPQPSSVNFIENPPELNDSNQAQADGNIDLVSPDSGLATIRSSRSSKESSVFLSDDSPVGDGGAPHHSLLPGFDSYSPIPEGIVAEEHAHSGEHSEHFDLFNFDSAPIASEQSQPSSHSADYSPEDDFPNSDSSEGNLSAGPKGLGEMGINMSNYSSSSLLSEAGKDSLVEFDEEFIQRQESSGDNSERNLSLTCFAGEEPSSPERLKNPGKMIPPTPMNSFVEISPSNEEPTPLYPEDIIQNAIDTGHLGPPQARARCRSWWGGLEIDSKNVVDTWNASEQESVFQSPEPWKDPKPEPVERRTSDSTFQPKSLEFSKSDPWESEFGQPELGNKEAQDQKEESLQYQHLPTVRPHLTDASPHGTNHLIEDFAALWHSGHSPTTMPEPWGNPTDAGEAAVTMSFPTWGAFDKEEDNADTLKNTWNLHPTNNETPSGQEPSEWAMGQSGFSFPAADLLDNPLIEVNKDAAPEIWGKNNSSKDTSLTSGSPTSDLGQTWNNSKLPGEDQNGLVDPKATGKVYEKEGSWSLFEESAKKRGADVLAPWEDSFLSYKCSDYSASNIGEDSVPSPLDTNYSTSDSYTSPTYAGDEKEIANKPVDKDNGFEAKDAEFPAEGLEVLATSSQQSQRNRIGSGPGNLDMWALPHTEDKPEGNDAHHPDSDALKTEHAEDKNASMEDDVRESSPSSYDDPSMMRLYEANRQLTLLHSNTNSRQAAPDSLDTWNRVTLEDTQSTATISDMDNDLDWDDCSGGVAISGDGQAEGYIAANSEPETRFSVKQLEPWGTEHQEANQVDWDLSASAEPTGDPGPSEYQTLNEKTGQLIANSIWDSVMGDKNMPSFRLPSPPNTVDMEHGTWPSESPRHSNGKDSHMLEASRLSESGGLTSQPVNQDTWGDSQGDTASSVTGLASPEHFAQSDPWTGHTYGQSESEIEGLVASDCEHLDKEAALGSGVNGAPWAFGKKPRDQEFSSSDAFEHQDISSASGKISSLSVTSSPQSEEPGEALEVEKEPFILDSLAVQTETFTWDLQSKDTHEESLVDHRNLGEANTTLDRINPMKNRPLSGMELEKTEACTILKPERANGKLLYESSQDFGVWDGPMDSDVWDSHISYETAMNSTGQRTEERSLEALSPGNYDRDSLSSGCTHSSASSPDLHDSSVALSSWTYGPSAEHQKENHDDANKQIHQESELFTTEAHVDVITEMKDFVENREDGFGKMSNQEDPQFPEIPNDPFNSGPSSSSSSLGADKYSEYSHAYQEGDLTTKRQEENELGFLEIVEPEGTRIISTSSGSGNDSGGDEELLEKELHLATVAQSEAGACTSLHEPAFSATEHSKPEFSVFVGSLESIEKENKSSPFSDSQQSSPGQWILSPLMQADTQDTCKEETRAAETGTMDTTWHGSASTEAKNGDPDKLEMLGFSADSTEWWNAGAQEGRANAGMSAEELSNSEGELEPTSPVFQNAGPWSLPIQNDSEPVDTGSTNPFRGKLKSPVLDSHGDKSQEKLWNIQPKQLDSDANQLSQLVILDQMKDKDSGQQTAMSPAAGDLPAETLTQGQGRESMLSVWDRAEPALTHRDENGCVSTGVSPTECQQENQWEPEKPYLSHVTHSSTPTENALESNAPTQLMRKLDSDWNSPSPSEPQHNFVPDILHGNFEEGGQLASASPDLWMDVKQPFSFKVDSENPDILTHCDHDSNSQASSSPDVCHDSEGEQKMEKHTAVYLGLEVEPSEFSLTEPNMNDEPTWEPEQESLPHNSELHSEHAMPLPPIDSQNDINNSSKPASSRSSPEPSDMRGDNNTSVTSMEEDTNPEVEAVDSVTIPGHFPRSEDADTFEAHQEVSVEVDDSWVSKDLCPESQTGTRALLDCEQPFASESPAVLTDIFLTSDTCLDVSEAALDHSFSDASGLNTSTGTIDDMSKLTLSEGHPETPVDGDAGKQDVCSSEASWGDFEYDAMGQNIDEELMREPEHFLYGGDLPSEESALKQSLTPYTPPFDLSYLTEPTGCTETAQGAESPGDESLGSDAAEMLLSALPDHREEDKAETNIRKPRYQMTVLHIHEDPEALSSPVGGTGSNNESSPSNIDWEIETDNSDSPAGGDMKPPNGKEILELEEDEKVIPTKGPKQTELEYKEEKQPEQSEDHQVLAVDYILVSHEKDSPLKPEAREARENIPELEQLSIGSRETGLPETQLSGTPDTCQSEFLNDVKVHSAERMSSSSNHESASLENPAQDQSWMVLSHSEVGDPPTETRDSGPESPGRTPEPFLSLSLDKGPKSQVLERNKPLNSLALEEVAGLSSQSRNIERQGQAGLDAVPTQAATHDNEWEMLSPQLSRKNRNPPQEMEEETQCPEPGPRKPRLKGPPSEDEGMDIHFEEGVLSPSAADMRPEPPNSLDLNGSHPRRIKLTAPNINLSLDQSEGSILSDDNLDSPDEIDINVDELDTPDEADSFEYTNHEDPTANKSSGQESESIPEYTAEEEREDNRLWRTVVIGEQEQRIDMKVIEPYRRVISHGGYYGDGLNAIIVFAACFLPDSSRADYHYVMENLFLYVISTLELMVAEDYMIVYLNGATPRRKMPGLGWMKKCYQMIDRRLRKNLKSFIIVHPSWFIRTILAVTRPFISSKFSSKIKYVTSLSELSGLIPMDCIHIPESIIKYDEEKSFKRSVRLDEELREASEAAKTSCLYNDPEMSSMEKDIDMKLKEKP.

Position 1 is an N-acetylmethionine (Met1). Residues 109–111 carry the DHH motif motif; it reads GSH. 18 disordered regions span residues 394-417, 430-465, 500-536, 672-733, 811-837, 861-907, 947-1080, 1224-1316, 1338-1395, 1502-1543, 1600-1652, 1776-1799, 1836-1886, 1961-1980, 2071-2196, 2410-2782, 2797-2816, and 2825-2859; these read QPSS…QADG, TIRS…PGFD, ASEQ…PKGL, EQES…QKEE, KNTW…MGQS, EIWG…KATG, SASN…DDPS, NMPS…GQSE, SGVN…LEVE, MNST…DLHD, GFGK…TTKR, ETGT…DPDK, GELE…GDKS, DENG…QENQ, ILTH…NPEV, MLLS…SHPR, QSEG…EIDI, and DEAD…AEEE. A compositionally biased stretch (polar residues) spans 501–511; sequence SEQSQPSSHSA. Basic and acidic residues-rich tracts occupy residues 682 to 696 and 723 to 733; these read PWKD…RRTS and GNKEAQDQKEE. 2 stretches are compositionally biased toward polar residues: residues 811-828 and 865-891; these read KNTW…SGQE and KNNS…NNSK. Residues 962 to 975 show a composition bias toward low complexity; that stretch reads TNYSTSDSYTSPTY. Residues 977 to 999 are compositionally biased toward basic and acidic residues; that stretch reads GDEKEIANKPVDKDNGFEAKDAE. Residues 1009 to 1019 are compositionally biased toward polar residues; it reads ATSSQQSQRNR. A compositionally biased stretch (basic and acidic residues) spans 1034–1063; that stretch reads HTEDKPEGNDAHHPDSDALKTEHAEDKNAS. Residues 1071–1080 show a composition bias toward low complexity; the sequence is SSPSSYDDPS. Residues 1248-1261 are compositionally biased toward basic and acidic residues; the sequence is SPRHSNGKDSHMLE. Positions 1265–1294 are enriched in polar residues; that stretch reads LSESGGLTSQPVNQDTWGDSQGDTASSVTG. Over residues 1350 to 1366 the composition is skewed to basic and acidic residues; that stretch reads KPRDQEFSSSDAFEHQD. Low complexity predominate over residues 1368-1378; sequence SSASGKISSLS. Composition is skewed to polar residues over residues 1779 to 1792, 1854 to 1869, and 1965 to 1980; these read TMDT…STEA, PIQN…STNP, and CVST…QENQ. Over residues 2089 to 2103 the composition is skewed to basic and acidic residues; that stretch reads VCHDSEGEQKMEKHT. Over residues 2162 to 2174 the composition is skewed to low complexity; it reads SSKPASSRSSPEP. Basic and acidic residues-rich tracts occupy residues 2416-2428, 2506-2525, and 2535-2553; these read PDHR…ETNI, KQTE…EDHQ, and SHEK…RENI. Positions 2569-2584 are enriched in polar residues; it reads PETQLSGTPDTCQSEF. The segment covering 2595–2606 has biased composition (low complexity); that stretch reads RMSSSSNHESAS. Polar residues predominate over residues 2607 to 2617; sequence LENPAQDQSWM. Residues 2653 to 2664 show a composition bias toward basic and acidic residues; the sequence is KGPKSQVLERNK. The segment covering 2806 to 2816 has biased composition (acidic residues); sequence DNLDSPDEIDI. The span at 2840–2849 shows a compositional bias: polar residues; that stretch reads ANKSSGQESE. A CRAL-TRIO domain is found at 2879-3040; the sequence is DMKVIEPYRR…SIIKYDEEKS (162 aa).

The protein belongs to the PPase class C family. Prune subfamily.

It is found in the cytoplasm. Functionally, may play an important role in regulating differentiation, survival and aggressiveness of the tumor cells. This is Protein prune homolog 2 (Prune2) from Mus musculus (Mouse).